A 340-amino-acid chain; its full sequence is Extracellular matrix protein-binding protein emp (340 aa).

An N-terminal signal peptide occupies residues 1-26; it reads MKKKLLVLTMSTLFATQIMNSNHAKA.

The protein resides in the cell surface. Functionally, adhesin that binds to the host cell extracellular matrix proteins fibronectin, fibrinogen, collagen, and vitronectin. This Staphylococcus aureus (strain USA300) protein is Extracellular matrix protein-binding protein emp (emp).